We begin with the raw amino-acid sequence, 149 residues long: Large ribosomal subunit protein uL15 (149 aa).

Basic and acidic residues predominate over residues 1 to 12 (MSEPIKLHDLRP). The interval 1–55 (MSEPIKLHDLRPAKGANKPKTRVGRGEASKGKTAGRGTKGTKARKQVSAAFEGGQ) is disordered.

It belongs to the universal ribosomal protein uL15 family. As to quaternary structure, part of the 50S ribosomal subunit.

In terms of biological role, binds to the 23S rRNA. This is Large ribosomal subunit protein uL15 from Corynebacterium kroppenstedtii (strain DSM 44385 / JCM 11950 / CIP 105744 / CCUG 35717).